We begin with the raw amino-acid sequence, 514 residues long: Probable lysine--tRNA ligase, cytoplasmic (514 aa).

It belongs to the class-II aminoacyl-tRNA synthetase family. Homodimer.

It is found in the cytoplasm. The enzyme catalyses tRNA(Lys) + L-lysine + ATP = L-lysyl-tRNA(Lys) + AMP + diphosphate. This chain is Probable lysine--tRNA ligase, cytoplasmic, found in Vairimorpha ceranae (strain BRL01) (Microsporidian parasite).